The primary structure comprises 244 residues: Troponin I, cardiac muscle (244 aa).

Residues 1–25 are compositionally biased toward acidic residues; that stretch reads MSDEEEVTYEEEEEEYVEEEEEEVV. The tract at residues 1 to 67 is disordered; sequence MSDEEEVTYE…PQVKRKPKIS (67 aa). At S2 the chain carries N-acetylserine. At S2 the chain carries Phosphoserine; by CK2. The span at 27 to 42 shows a compositional bias: pro residues; it reads PEPPKPAPPPAAPPPL.

Belongs to the troponin I family. As to quaternary structure, binds to actin and tropomyosin. In terms of tissue distribution, heart.

Troponin I is the inhibitory subunit of troponin, the thin filament regulatory complex which confers calcium-sensitivity to striated muscle actomyosin ATPase activity. This is Troponin I, cardiac muscle (tnni3) from Xenopus laevis (African clawed frog).